The sequence spans 127 residues: Histone H2B type 1-A (127 aa).

A disordered region spans residues 1-32; that stretch reads MPEVSAKGTTISKKGFKKAVTKTQKKEGRKRK. N-acetylproline is present on Pro2. An N6-acetyllysine; alternate mark is found at Lys7, Lys13, Lys14, Lys17, Lys18, Lys22, and Lys25. N6-crotonyllysine; alternate occurs at positions 7, 13, 14, 17, 18, 22, 25, and 36. 2 positions are modified to N6-lactoyllysine; alternate: Lys7 and Lys13. Lys7 participates in a covalent cross-link: Glycyl lysine isopeptide (Lys-Gly) (interchain with G-Cter in SUMO2); alternate. Residues Lys17, Lys18, Lys22, and Lys25 each carry the N6-lactoyllysine; alternate modification. Residue Lys22 forms a Glycyl lysine isopeptide (Lys-Gly) (interchain with G-Cter in SUMO2); alternate linkage. An N6-succinyllysine; alternate modification is found at Lys36. Lys36 is covalently cross-linked (Glycyl lysine isopeptide (Lys-Gly) (interchain with G-Cter in ubiquitin); alternate). Phosphoserine is present on Ser38. Position 45 is an N6-lactoyllysine; alternate (Lys45). Lys48 carries the N6-methyllysine modification. Lys59 carries the N6,N6-dimethyllysine modification. At Arg81 the chain carries Dimethylated arginine. Lys87 bears the N6-acetyllysine; alternate mark. Lys87 bears the N6-lactoyllysine; alternate mark. At Lys87 the chain carries N6,N6,N6-trimethyllysine; alternate. Arg88 and Arg94 each carry omega-N-methylarginine. Position 110 is an N6-lactoyllysine; alternate (Lys110). An N6-methyllysine modification is found at Lys110. Phosphothreonine is present on Thr117. N6-lactoyllysine; alternate is present on residues Lys118 and Lys122. N6-succinyllysine; alternate is present on residues Lys118 and Lys122. Residue Lys118 is modified to N6-methylated lysine; alternate. A Glycyl lysine isopeptide (Lys-Gly) (interchain with G-Cter in ubiquitin); alternate cross-link involves residue Lys122.

The protein belongs to the histone H2B family. The nucleosome is a histone octamer containing two molecules each of H2A, H2B, H3 and H4 assembled in one H3-H4 heterotetramer and two H2A-H2B heterodimers. Post-translationally, monoubiquitination at Lys-36 by the MSL1/MSL2 dimer is required for histone H3 'Lys-4' (H3K4me) and 'Lys-79' (H3K79me) methylation and transcription activation at specific gene loci, such as HOXA9 and MEIS1 loci. Similarly, monoubiquitination of Lys-122 (H2BK120Ub) by the RNF20/40 complex gives a specific tag for epigenetic transcriptional activation and is also prerequisite for histone H3 'Lys-4' and 'Lys-79' methylation. It also functions cooperatively with the FACT dimer to stimulate elongation by RNA polymerase II. H2BK120Ub also acts as a regulator of mRNA splicing: deubiquitination by USP49 is required for efficient cotranscriptional splicing of a large set of exons. Crotonylation (Kcr) is specifically present in male germ cells and marks testis-specific genes in post-meiotic cells, including X-linked genes that escape sex chromosome inactivation in haploid cells. Crotonylation marks active promoters and enhancers and confers resistance to transcriptional repressors. It is also associated with post-meiotically activated genes on autosomes. In terms of processing, acetylated during spermatogenesis. Acetylated form is most abundant in spermatogonia compared to spermatocytes and round spermatids. Post-translationally, phosphorylated at Thr-117 in spermatogonia, spermatocytes and round spermatids. Methylated at Lys-118 in spermatogonia, spermatocytes and round spermatids. In terms of processing, lactylated in macrophages by EP300/P300 by using lactoyl-CoA directly derived from endogenous or exogenous lactate, leading to stimulates gene transcription. In terms of tissue distribution, testis. Expressed in pachytene spermatocytes during meiotic prophase I in the absence of any significant DNA synthesis.

The protein resides in the nucleus. It localises to the chromosome. Functionally, variant histone specifically required to direct the transformation of dissociating nucleosomes to protamine in male germ cells. Entirely replaces classical histone H2B prior nucleosome to protamine transition and probably acts as a nucleosome dissociating factor that creates a more dynamic chromatin, facilitating the large-scale exchange of histones. Core component of nucleosome. Nucleosomes wrap and compact DNA into chromatin, limiting DNA accessibility to the cellular machineries which require DNA as a template. Histones thereby play a central role in transcription regulation, DNA repair, DNA replication and chromosomal stability. DNA accessibility is regulated via a complex set of post-translational modifications of histones, also called histone code, and nucleosome remodeling. The polypeptide is Histone H2B type 1-A (Rattus norvegicus (Rat)).